Here is a 319-residue protein sequence, read N- to C-terminus: ATP-dependent 6-phosphofructokinase (319 aa).

Gly-11 is a binding site for ATP. ADP is bound at residue 21-25 (RAVVR). ATP contacts are provided by residues 72–73 (RC) and 102–105 (GDGS). Asp-103 provides a ligand contact to Mg(2+). 125–127 (TID) contacts substrate. Residue Asp-127 is the Proton acceptor of the active site. An ADP-binding site is contributed by Arg-154. Residues Arg-162 and 169–171 (MGR) each bind substrate. ADP contacts are provided by residues 185–187 (GAE), Arg-211, and 213–215 (KLH). Residues Glu-222, Arg-243, and 249–252 (HLQR) contribute to the substrate site.

This sequence belongs to the phosphofructokinase type A (PFKA) family. ATP-dependent PFK group I subfamily. Prokaryotic clade 'B1' sub-subfamily. In terms of assembly, homotetramer. The cofactor is Mg(2+).

The protein localises to the cytoplasm. The enzyme catalyses beta-D-fructose 6-phosphate + ATP = beta-D-fructose 1,6-bisphosphate + ADP + H(+). Its pathway is carbohydrate degradation; glycolysis; D-glyceraldehyde 3-phosphate and glycerone phosphate from D-glucose: step 3/4. Its activity is regulated as follows. Allosterically activated by ADP and other diphosphonucleosides, and allosterically inhibited by phosphoenolpyruvate. Functionally, catalyzes the phosphorylation of D-fructose 6-phosphate to fructose 1,6-bisphosphate by ATP, the first committing step of glycolysis. The chain is ATP-dependent 6-phosphofructokinase from Clostridium novyi (strain NT).